The following is a 254-amino-acid chain: Mantle protein (254 aa).

The first 16 residues, 1-16, serve as a signal peptide directing secretion; the sequence is MLAVLLFAALVATAYS.

As to expression, prismatic layer of shell (at protein level). Expressed primarily in the mantle with highest level in the outer epithelium of the mantle edge and lower level in the mantle pallium.

It is found in the secreted. This chain is Mantle protein, found in Margaritifera margaritifera (Freshwater pearl mussel).